We begin with the raw amino-acid sequence, 164 residues long: ATP synthase subunit b (164 aa).

A helical membrane pass occupies residues 6–26; that stretch reads GELVGNFILVTGSVIVLLLLI.

Belongs to the ATPase B chain family. In terms of assembly, F-type ATPases have 2 components, F(1) - the catalytic core - and F(0) - the membrane proton channel. F(1) has five subunits: alpha(3), beta(3), gamma(1), delta(1), epsilon(1). F(0) has three main subunits: a(1), b(2) and c(10-14). The alpha and beta chains form an alternating ring which encloses part of the gamma chain. F(1) is attached to F(0) by a central stalk formed by the gamma and epsilon chains, while a peripheral stalk is formed by the delta and b chains.

Its subcellular location is the cell membrane. In terms of biological role, f(1)F(0) ATP synthase produces ATP from ADP in the presence of a proton or sodium gradient. F-type ATPases consist of two structural domains, F(1) containing the extramembraneous catalytic core and F(0) containing the membrane proton channel, linked together by a central stalk and a peripheral stalk. During catalysis, ATP synthesis in the catalytic domain of F(1) is coupled via a rotary mechanism of the central stalk subunits to proton translocation. Its function is as follows. Component of the F(0) channel, it forms part of the peripheral stalk, linking F(1) to F(0). In Streptococcus pyogenes serotype M3 (strain ATCC BAA-595 / MGAS315), this protein is ATP synthase subunit b.